Consider the following 233-residue polypeptide: Pre-mRNA-splicing factor syf-2 (233 aa).

Over residues 1 to 16 (MSDSEQTSSGTASSGS) the composition is skewed to polar residues. 2 disordered regions span residues 1–80 (MSDS…EDKG) and 95–119 (VTEKLEQKRKRKKNPDQGFASYEDM). The span at 17 to 80 (KMKDFNQRFR…QDRKEAEDKG (64 aa)) shows a compositional bias: basic and acidic residues. The stretch at 18-77 (MKDFNQRFRDLHKMRQKARKENHAQVVEEDRRKKLPKNFEAKKERDQWQVKELQDRKEAE) forms a coiled coil.

It belongs to the SYF2 family. As to quaternary structure, may be part of a spliceosome complex.

It is found in the nucleus. In terms of biological role, may be involved in pre-mRNA splicing. The polypeptide is Pre-mRNA-splicing factor syf-2 (Caenorhabditis briggsae).